The primary structure comprises 143 residues: Large ribosomal subunit protein uL11 (143 aa).

It belongs to the universal ribosomal protein uL11 family. Part of the ribosomal stalk of the 50S ribosomal subunit. Interacts with L10 and the large rRNA to form the base of the stalk. L10 forms an elongated spine to which L12 dimers bind in a sequential fashion forming a multimeric L10(L12)X complex. Post-translationally, one or more lysine residues are methylated.

Functionally, forms part of the ribosomal stalk which helps the ribosome interact with GTP-bound translation factors. This chain is Large ribosomal subunit protein uL11, found in Paraburkholderia phymatum (strain DSM 17167 / CIP 108236 / LMG 21445 / STM815) (Burkholderia phymatum).